Reading from the N-terminus, the 375-residue chain is Succinyl-diaminopimelate desuccinylase (375 aa).

His66 is a Zn(2+) binding site. Residue Asp68 is part of the active site. Zn(2+) is bound at residue Asp99. Glu133 serves as the catalytic Proton acceptor. Zn(2+) is bound by residues Glu134, Glu162, and His348.

It belongs to the peptidase M20A family. DapE subfamily. Homodimer. The cofactor is Zn(2+). Requires Co(2+) as cofactor.

The enzyme catalyses N-succinyl-(2S,6S)-2,6-diaminopimelate + H2O = (2S,6S)-2,6-diaminopimelate + succinate. The protein operates within amino-acid biosynthesis; L-lysine biosynthesis via DAP pathway; LL-2,6-diaminopimelate from (S)-tetrahydrodipicolinate (succinylase route): step 3/3. Functionally, catalyzes the hydrolysis of N-succinyl-L,L-diaminopimelic acid (SDAP), forming succinate and LL-2,6-diaminopimelate (DAP), an intermediate involved in the bacterial biosynthesis of lysine and meso-diaminopimelic acid, an essential component of bacterial cell walls. This chain is Succinyl-diaminopimelate desuccinylase, found in Stenotrophomonas maltophilia (strain R551-3).